A 579-amino-acid polypeptide reads, in one-letter code: Isocitrate dehydrogenase kinase/phosphatase (579 aa).

ATP contacts are provided by residues 324–330 (ADGTPGM) and K345. D380 is an active-site residue.

The protein belongs to the AceK family.

It is found in the cytoplasm. It carries out the reaction L-seryl-[isocitrate dehydrogenase] + ATP = O-phospho-L-seryl-[isocitrate dehydrogenase] + ADP + H(+). Functionally, bifunctional enzyme which can phosphorylate or dephosphorylate isocitrate dehydrogenase (IDH) on a specific serine residue. This is a regulatory mechanism which enables bacteria to bypass the Krebs cycle via the glyoxylate shunt in response to the source of carbon. When bacteria are grown on glucose, IDH is fully active and unphosphorylated, but when grown on acetate or ethanol, the activity of IDH declines drastically concomitant with its phosphorylation. This is Isocitrate dehydrogenase kinase/phosphatase from Xanthomonas euvesicatoria pv. vesicatoria (strain 85-10) (Xanthomonas campestris pv. vesicatoria).